The primary structure comprises 445 residues: Argininosuccinate synthase (445 aa).

Residues 17-25 (AFSGGLDTS) and alanine 43 contribute to the ATP site. An L-citrulline-binding site is contributed by tyrosine 99. Glycine 129 and threonine 131 together coordinate ATP. L-aspartate contacts are provided by threonine 131, asparagine 135, and aspartate 136. Asparagine 135 serves as a coordination point for L-citrulline. Position 136 (aspartate 136) interacts with ATP. Residues arginine 139 and serine 192 each coordinate L-citrulline. Aspartate 194 provides a ligand contact to ATP. L-citrulline is bound by residues threonine 201, glutamate 203, and glutamate 280.

It belongs to the argininosuccinate synthase family. Type 2 subfamily. In terms of assembly, homotetramer.

The protein resides in the cytoplasm. The enzyme catalyses L-citrulline + L-aspartate + ATP = 2-(N(omega)-L-arginino)succinate + AMP + diphosphate + H(+). It functions in the pathway amino-acid biosynthesis; L-arginine biosynthesis; L-arginine from L-ornithine and carbamoyl phosphate: step 2/3. The sequence is that of Argininosuccinate synthase from Rhodopseudomonas palustris (strain BisB5).